Here is a 103-residue protein sequence, read N- to C-terminus: Large ribosomal subunit protein bL21 (103 aa).

This sequence belongs to the bacterial ribosomal protein bL21 family. As to quaternary structure, part of the 50S ribosomal subunit. Contacts protein L20.

Functionally, this protein binds to 23S rRNA in the presence of protein L20. This chain is Large ribosomal subunit protein bL21, found in Legionella pneumophila (strain Paris).